Here is a 323-residue protein sequence, read N- to C-terminus: 4-hydroxythreonine-4-phosphate dehydrogenase (323 aa).

Thr133 lines the substrate pocket. 3 residues coordinate a divalent metal cation: His161, His206, and His261. Substrate-binding residues include Lys269, Asn278, and Arg287.

Belongs to the PdxA family. As to quaternary structure, homodimer. Zn(2+) is required as a cofactor. Mg(2+) serves as cofactor. The cofactor is Co(2+).

It localises to the cytoplasm. It catalyses the reaction 4-(phosphooxy)-L-threonine + NAD(+) = 3-amino-2-oxopropyl phosphate + CO2 + NADH. The protein operates within cofactor biosynthesis; pyridoxine 5'-phosphate biosynthesis; pyridoxine 5'-phosphate from D-erythrose 4-phosphate: step 4/5. Catalyzes the NAD(P)-dependent oxidation of 4-(phosphooxy)-L-threonine (HTP) into 2-amino-3-oxo-4-(phosphooxy)butyric acid which spontaneously decarboxylates to form 3-amino-2-oxopropyl phosphate (AHAP). The sequence is that of 4-hydroxythreonine-4-phosphate dehydrogenase from Xanthomonas axonopodis pv. citri (strain 306).